A 142-amino-acid chain; its full sequence is Large ribosomal subunit protein uL13 (142 aa).

This sequence belongs to the universal ribosomal protein uL13 family. In terms of assembly, part of the 50S ribosomal subunit.

Its function is as follows. This protein is one of the early assembly proteins of the 50S ribosomal subunit, although it is not seen to bind rRNA by itself. It is important during the early stages of 50S assembly. The chain is Large ribosomal subunit protein uL13 from Xylella fastidiosa (strain M23).